Reading from the N-terminus, the 1177-residue chain is Transcription-repair-coupling factor (1177 aa).

One can recognise a Helicase ATP-binding domain in the interval 638 to 799 (DMERERPMDR…MLGVRDLSVI (162 aa)). An ATP-binding site is contributed by 651–658 (GDVGYGKT). The short motif at 752-755 (DEEQ) is the DEEQ box element. The Helicase C-terminal domain maps to 820–974 (LVREAIEREL…GFKIAMRDLT (155 aa)).

It in the N-terminal section; belongs to the UvrB family. This sequence in the C-terminal section; belongs to the helicase family. RecG subfamily.

It localises to the cytoplasm. Its function is as follows. Couples transcription and DNA repair by recognizing RNA polymerase (RNAP) stalled at DNA lesions. Mediates ATP-dependent release of RNAP and its truncated transcript from the DNA, and recruitment of nucleotide excision repair machinery to the damaged site. Probably required to repair non-bulky DNA lesions. This chain is Transcription-repair-coupling factor, found in Bacillus subtilis (strain 168).